A 430-amino-acid polypeptide reads, in one-letter code: Adenylosuccinate synthetase (430 aa).

GTP-binding positions include 12–18 (GDEGKGK) and 40–42 (GHT). Asp13 acts as the Proton acceptor in catalysis. Mg(2+) contacts are provided by Asp13 and Gly40. IMP-binding positions include 13–16 (DEGK), 38–41 (NAGH), Thr130, Arg144, Gln224, Thr239, and Arg303. His41 serves as the catalytic Proton donor. 299–305 (TNTGRPR) contacts substrate. GTP is bound by residues Arg305, 331-333 (KLD), and 413-415 (STS).

The protein belongs to the adenylosuccinate synthetase family. Homodimer. Mg(2+) serves as cofactor.

Its subcellular location is the cytoplasm. The enzyme catalyses IMP + L-aspartate + GTP = N(6)-(1,2-dicarboxyethyl)-AMP + GDP + phosphate + 2 H(+). Its pathway is purine metabolism; AMP biosynthesis via de novo pathway; AMP from IMP: step 1/2. Its function is as follows. Plays an important role in the de novo pathway of purine nucleotide biosynthesis. Catalyzes the first committed step in the biosynthesis of AMP from IMP. The sequence is that of Adenylosuccinate synthetase from Rhodopseudomonas palustris (strain HaA2).